We begin with the raw amino-acid sequence, 65 residues long: Diapause-specific peptide (65 aa).

The signal sequence occupies residues 1 to 24 (MGAALKMTIFLLIVACAMIATTEA). 3 disulfide bridges follow: Cys31-Cys45, Cys35-Cys57, and Cys46-Cys64.

Highly expressed in the fat body.

Its subcellular location is the secreted. In terms of biological role, has antifungal activity against T.rubrum. Blocks voltage-dependent N-type calcium channels (Cav2.2 / CACNA1B). In Gastrophysa atrocyanea (Leaf beetle), this protein is Diapause-specific peptide.